The sequence spans 443 residues: MKRTEIQQLLNEYPLVKNLMELEEIFWFNPCNTTLKEGLPFVGLGADDVEDAEARLDRFASYLCKAFPETAVTHGIIESEIVAIPTMQKTLEQHYGVGITGRILLKKDSHLPISGSIKARGGIYEVLTHAEKLALQAGLLAENDDYSKLFSEELRRFFNQYSIAVGSTGNLGLSIGIASAKLGFNVSVHMSADAREWKKQKLRSHGVNVVEHELDYGVAVARGRKEAESAPNCFFIDDENSQTLFLGYSVAGGRVKAQFEQMNIVVDEDHPLFVYLPCGVGGGPGGVAFGLKLAFGDHVHCIFAEPTHSPSMLLGVYTGLHDNICVQDIGIDNITAADGLAVGRASGFVGRAMERLLDGFYTVQDQEMYNLLGLLDRDEGIRLEPSALVGMAGPARVSGNLDYLNNKNLSAEKMKQATHLVWATGGGMVPDDEMTKYLATAKI.

An N6-(pyridoxal phosphate)lysine modification is found at lysine 118.

The protein belongs to the serine/threonine dehydratase family. DsdA subfamily. Monomer. Pyridoxal 5'-phosphate is required as a cofactor.

The enzyme catalyses D-serine = pyruvate + NH4(+). This chain is D-serine dehydratase, found in Photorhabdus laumondii subsp. laumondii (strain DSM 15139 / CIP 105565 / TT01) (Photorhabdus luminescens subsp. laumondii).